The following is a 347-amino-acid chain: Dual-specificity RNA methyltransferase RlmN (347 aa).

E93 acts as the Proton acceptor in catalysis. The 229-residue stretch at 99 to 327 (DEGRNTLCIS…VITRDSRGSD (229 aa)) folds into the Radical SAM core domain. Cysteines 106 and 332 form a disulfide. 3 residues coordinate [4Fe-4S] cluster: C113, C117, and C120. S-adenosyl-L-methionine-binding positions include 158–159 (GE), S190, 213–215 (SLN), and N289. The S-methylcysteine intermediate role is filled by C332.

Belongs to the radical SAM superfamily. RlmN family. [4Fe-4S] cluster serves as cofactor.

It is found in the cytoplasm. It carries out the reaction adenosine(2503) in 23S rRNA + 2 reduced [2Fe-2S]-[ferredoxin] + 2 S-adenosyl-L-methionine = 2-methyladenosine(2503) in 23S rRNA + 5'-deoxyadenosine + L-methionine + 2 oxidized [2Fe-2S]-[ferredoxin] + S-adenosyl-L-homocysteine. It catalyses the reaction adenosine(37) in tRNA + 2 reduced [2Fe-2S]-[ferredoxin] + 2 S-adenosyl-L-methionine = 2-methyladenosine(37) in tRNA + 5'-deoxyadenosine + L-methionine + 2 oxidized [2Fe-2S]-[ferredoxin] + S-adenosyl-L-homocysteine. Functionally, specifically methylates position 2 of adenine 2503 in 23S rRNA and position 2 of adenine 37 in tRNAs. m2A2503 modification seems to play a crucial role in the proofreading step occurring at the peptidyl transferase center and thus would serve to optimize ribosomal fidelity. This chain is Dual-specificity RNA methyltransferase RlmN, found in Pelobacter propionicus (strain DSM 2379 / NBRC 103807 / OttBd1).